The primary structure comprises 304 residues: MKARVLAKTWLTHLAVERGLSANTLSNYRRDVERYCDWLEAAGLDDIRDITTAHVESYVKDLRRGIDGQQALSASSAGRALIVARGLHKFALMEGEVAADVAADVSPPAMGRHLPDTLSINEVALLIDAIPHSDIATPVDLRDRALVELLYGTGARISEAIGLAVDDVSEMPEVLRITGKGSKQRIVPFGSMAQQAVREYLVRARPALSKGKSHALFLNQRGGPLSRQSAWAVLKKTVERAGLDKDISPHTLRHSFATHLLEGGADVRVVQELLGHSSVTTTQIYTHITADSLREVWRGAHPRA.

The 92-residue stretch at 1–92 (MKARVLAKTW…VARGLHKFAL (92 aa)) folds into the Core-binding (CB) domain. The Tyr recombinase domain maps to 113 to 298 (HLPDTLSINE…TADSLREVWR (186 aa)). Catalysis depends on residues R156, K180, H250, R253, and H276. Y285 functions as the O-(3'-phospho-DNA)-tyrosine intermediate in the catalytic mechanism.

Belongs to the 'phage' integrase family. XerD subfamily. Forms a cyclic heterotetrameric complex composed of two molecules of XerC and two molecules of XerD.

The protein resides in the cytoplasm. Its function is as follows. Site-specific tyrosine recombinase, which acts by catalyzing the cutting and rejoining of the recombining DNA molecules. The XerC-XerD complex is essential to convert dimers of the bacterial chromosome into monomers to permit their segregation at cell division. It also contributes to the segregational stability of plasmids. The polypeptide is Tyrosine recombinase XerD (Corynebacterium glutamicum (strain ATCC 13032 / DSM 20300 / JCM 1318 / BCRC 11384 / CCUG 27702 / LMG 3730 / NBRC 12168 / NCIMB 10025 / NRRL B-2784 / 534)).